A 26-amino-acid polypeptide reads, in one-letter code: Hainantoxin F1-31.97 (26 aa).

Disulfide bonds link Cys2–Cys16 and Cys9–Cys21.

It belongs to the neurotoxin 10 (Hwtx-1) family. 17 (Hntx-9) subfamily. As to expression, expressed by the venom gland.

Its subcellular location is the secreted. Functionally, ion channel inhibitor. The polypeptide is Hainantoxin F1-31.97 (Cyriopagopus hainanus (Chinese bird spider)).